The sequence spans 312 residues: Serine/threonine-protein phosphatase CPPED1 (312 aa).

S2 is subject to Phosphoserine. The catalytic stretch occupies residues 47–250; sequence KAWSTGNCDA…AVFSGHYHRN (204 aa). A divalent metal cation-binding residues include D90, N127, and H246. S293 is modified (phosphoserine).

Belongs to the metallophosphoesterase superfamily. CPPED1 family. The cofactor is a divalent metal cation.

It localises to the cytoplasm. It carries out the reaction O-phospho-L-seryl-[protein] + H2O = L-seryl-[protein] + phosphate. The enzyme catalyses O-phospho-L-threonyl-[protein] + H2O = L-threonyl-[protein] + phosphate. Its function is as follows. Protein phosphatase that dephosphorylates AKT family kinase specifically at 'Ser-473', blocking cell cycle progression and promoting cell apoptosis. May play an inhibitory role in glucose uptake by adipocytes. The chain is Serine/threonine-protein phosphatase CPPED1 (Cpped1) from Mus musculus (Mouse).